The chain runs to 353 residues: Photosystem II D2 protein (353 aa).

Thr-2 bears the N-acetylthreonine mark. At Thr-2 the chain carries Phosphothreonine. A helical membrane pass occupies residues 41 to 61 (CAYFALGGWFTGTTFVTSWYT). His-118 lines the chlorophyll a pocket. A helical membrane pass occupies residues 125–141 (GFMLRQFELARSVQLRP). Pheophytin a is bound by residues Gln-130 and Asn-143. The chain crosses the membrane as a helical span at residues 153-166 (VFVSVFLIYPLGQS). Residue His-198 coordinates chlorophyll a. The chain crosses the membrane as a helical span at residues 208-228 (AALLCAIHGATVENTLFEDGD). A plastoquinone contacts are provided by His-215 and Phe-262. A Fe cation-binding site is contributed by His-215. Position 269 (His-269) interacts with Fe cation. The chain crosses the membrane as a helical span at residues 279-295 (GLWMSALGVVGLALNLR).

This sequence belongs to the reaction center PufL/M/PsbA/D family. PSII is composed of 1 copy each of membrane proteins PsbA, PsbB, PsbC, PsbD, PsbE, PsbF, PsbH, PsbI, PsbJ, PsbK, PsbL, PsbM, PsbT, PsbX, PsbY, PsbZ, Psb30/Ycf12, at least 3 peripheral proteins of the oxygen-evolving complex and a large number of cofactors. It forms dimeric complexes. The cofactor is The D1/D2 heterodimer binds P680, chlorophylls that are the primary electron donor of PSII, and subsequent electron acceptors. It shares a non-heme iron and each subunit binds pheophytin, quinone, additional chlorophylls, carotenoids and lipids. There is also a Cl(-1) ion associated with D1 and D2, which is required for oxygen evolution. The PSII complex binds additional chlorophylls, carotenoids and specific lipids..

It localises to the plastid. The protein resides in the chloroplast thylakoid membrane. It carries out the reaction 2 a plastoquinone + 4 hnu + 2 H2O = 2 a plastoquinol + O2. In terms of biological role, photosystem II (PSII) is a light-driven water:plastoquinone oxidoreductase that uses light energy to abstract electrons from H(2)O, generating O(2) and a proton gradient subsequently used for ATP formation. It consists of a core antenna complex that captures photons, and an electron transfer chain that converts photonic excitation into a charge separation. The D1/D2 (PsbA/PsbD) reaction center heterodimer binds P680, the primary electron donor of PSII as well as several subsequent electron acceptors. D2 is needed for assembly of a stable PSII complex. The sequence is that of Photosystem II D2 protein from Olimarabidopsis pumila (Dwarf rocket).